Here is a 457-residue protein sequence, read N- to C-terminus: Glutamate--tRNA ligase 1 (457 aa).

The 'HIGH' region motif lies at 9-19 (PSPTGYIHIGN). Residues 250–254 (GLSKR) carry the 'KMSKS' region motif. Lysine 253 is a binding site for ATP.

It belongs to the class-I aminoacyl-tRNA synthetase family. Glutamate--tRNA ligase type 1 subfamily. Monomer.

Its subcellular location is the cytoplasm. The catalysed reaction is tRNA(Glu) + L-glutamate + ATP = L-glutamyl-tRNA(Glu) + AMP + diphosphate. In terms of biological role, catalyzes the attachment of glutamate to tRNA(Glu) in a two-step reaction: glutamate is first activated by ATP to form Glu-AMP and then transferred to the acceptor end of tRNA(Glu). The protein is Glutamate--tRNA ligase 1 of Brucella ovis (strain ATCC 25840 / 63/290 / NCTC 10512).